Here is a 494-residue protein sequence, read N- to C-terminus: MNANELFEKIRVKQVIGTLDINVTDITTDSRTASEGSIFVASKGYTVDSHKFCQNVVDQGAKVIVVNHQQDINGDVTQVIVPDTLRVASLLAHTLYDFPSHQLTTIGVTGTNGKTSIATMIHLIYRGLGKGSAYLGTNGFQINEHKTRGANTTPETVSLTKKIKQAVDENAEAMTMEVSSHGLSLGRLRGVEFDVAIFSNLTQDHLDFHGTMEAYGHAKSLLFSQLGEDLSKEKYAVLNNDDDFSKYLASVTPYEIFTYGIDHDAQFMAKNIQESLQGVHFDFDTPIGTYSVKTPYVGKFNISNIMAAMIAVWSKGTSMEDIVRVVENLEPVEGRLEVLDPSLPIDLIIDYAHTADGMNKLIDAVKPFVKQKLIFLIGMAGERDLTKTPEMGAVACRADYVIFTPDNPANDDPKMLTAELAKGATHNHYVEFDDRAEGIKHAIDIAEPGDTVVLASKGREPYQIMPGHIKVPHRDDLIGLEAAYKKFGGGPSEH.

Ser-30 is a binding site for UDP-N-acetyl-alpha-D-muramoyl-L-alanyl-D-glutamate. Position 110 to 116 (110 to 116 (GTNGKTS)) interacts with ATP. UDP-N-acetyl-alpha-D-muramoyl-L-alanyl-D-glutamate-binding positions include 152 to 153 (TT), Ser-179, and Arg-187. Lys-219 carries the N6-carboxylysine modification. Residues 406–409 (DNPA) carry the L-lysine recognition motif motif.

The protein belongs to the MurCDEF family. MurE subfamily. Post-translationally, carboxylation is probably crucial for Mg(2+) binding and, consequently, for the gamma-phosphate positioning of ATP.

The protein localises to the cytoplasm. It catalyses the reaction UDP-N-acetyl-alpha-D-muramoyl-L-alanyl-D-glutamate + L-lysine + ATP = UDP-N-acetyl-alpha-D-muramoyl-L-alanyl-gamma-D-glutamyl-L-lysine + ADP + phosphate + H(+). Its pathway is cell wall biogenesis; peptidoglycan biosynthesis. Functionally, catalyzes the addition of L-lysine to the nucleotide precursor UDP-N-acetylmuramoyl-L-alanyl-D-glutamate (UMAG) in the biosynthesis of bacterial cell-wall peptidoglycan. This is UDP-N-acetylmuramoyl-L-alanyl-D-glutamate--L-lysine ligase from Staphylococcus haemolyticus (strain JCSC1435).